The following is a 396-amino-acid chain: Pinosylvin synthase 2 (396 aa).

Residue 60 to 63 (KFKR) coordinates substrate. Cysteine 170 is a catalytic residue. Substrate contacts are provided by residues leucine 273 and 311-313 (GGR).

Belongs to the thiolase-like superfamily. Chalcone/stilbene synthases family. As to quaternary structure, homodimer.

The protein resides in the cytoplasm. The enzyme catalyses (E)-cinnamoyl-CoA + 3 malonyl-CoA + 3 H(+) = (E)-pinosylvin + 4 CO2 + 4 CoA. The catalysed reaction is 3-phenylpropanoyl-CoA + 3 malonyl-CoA + 3 H(+) = dihydropinosylvin + 4 CO2 + 4 CoA. The protein operates within phytoalexin biosynthesis; pinosylvin biosynthesis. Its function is as follows. Catalyzes the production of pinosylvin from cinnamoyl-CoA and malonyl-CoA, and dihydropinosylvin from dihydrocinnamoyl-CoA. In Pinus strobus (Eastern white pine), this protein is Pinosylvin synthase 2.